We begin with the raw amino-acid sequence, 286 residues long: Pyridoxal kinase PdxY (286 aa).

Residues S9 and 44 to 45 (TQ) contribute to the substrate site. ATP-binding residues include D111, E148, and K181. D222 is a substrate binding site.

Belongs to the pyridoxine kinase family. PdxY subfamily. Homodimer. It depends on Mg(2+) as a cofactor.

It catalyses the reaction pyridoxal + ATP = pyridoxal 5'-phosphate + ADP + H(+). It functions in the pathway cofactor metabolism; pyridoxal 5'-phosphate salvage; pyridoxal 5'-phosphate from pyridoxal: step 1/1. In terms of biological role, pyridoxal kinase involved in the salvage pathway of pyridoxal 5'-phosphate (PLP). Catalyzes the phosphorylation of pyridoxal to PLP. This chain is Pyridoxal kinase PdxY, found in Actinobacillus pleuropneumoniae serotype 5b (strain L20).